A 401-amino-acid chain; its full sequence is Imidazolonepropionase (401 aa).

The Fe(3+) site is built by His66 and His68. 2 residues coordinate Zn(2+): His66 and His68. 4-imidazolone-5-propanoate-binding residues include Arg75, Tyr138, and His171. Tyr138 serves as a coordination point for N-formimidoyl-L-glutamate. His236 contacts Fe(3+). His236 serves as a coordination point for Zn(2+). Residue Gln239 coordinates 4-imidazolone-5-propanoate. Residue Asp311 coordinates Fe(3+). A Zn(2+)-binding site is contributed by Asp311. N-formimidoyl-L-glutamate is bound by residues Asn313 and Gly315. Thr316 provides a ligand contact to 4-imidazolone-5-propanoate.

This sequence belongs to the metallo-dependent hydrolases superfamily. HutI family. Requires Zn(2+) as cofactor. Fe(3+) serves as cofactor.

Its subcellular location is the cytoplasm. The catalysed reaction is 4-imidazolone-5-propanoate + H2O = N-formimidoyl-L-glutamate. It functions in the pathway amino-acid degradation; L-histidine degradation into L-glutamate; N-formimidoyl-L-glutamate from L-histidine: step 3/3. Functionally, catalyzes the hydrolytic cleavage of the carbon-nitrogen bond in imidazolone-5-propanoate to yield N-formimidoyl-L-glutamate. It is the third step in the universal histidine degradation pathway. This chain is Imidazolonepropionase, found in Pseudomonas entomophila (strain L48).